The chain runs to 634 residues: Probable potassium transport system protein Kup (634 aa).

12 helical membrane-spanning segments follow: residues 21–41 (IILSAIGVVFGDIGTSPLYTL), 58–78 (VLGILSLIFWAMMLVVTIKYV), 110–130 (IYIVGILGIFGTSLFFGDGII), 148–168 (PHMKAFVVPITLAVLILLFLC), 180–200 (FGPITFLWFIAIGVVGVYNII), 217–237 (FFLEHGWHSMFVLGAVVLAVT), 258–278 (WMYVVLPMLALNYLGQGALVL), 296–316 (GLYPMIALATAAAVIASQALI), 348–368 (IYVPTVNWTLLMLVILTVIGF), 377–397 (AYGVAVTGTMMITTVLMIIYA), 408–428 (LLMIAIVFIAVDGAFFYANII), and 432–452 (DGAWFPLLLGVVIFTFMRTWL).

It belongs to the HAK/KUP transporter (TC 2.A.72) family.

The protein resides in the cell inner membrane. The catalysed reaction is K(+)(in) + H(+)(in) = K(+)(out) + H(+)(out). Its function is as follows. Transport of potassium into the cell. Likely operates as a K(+):H(+) symporter. The protein is Probable potassium transport system protein Kup of Xylella fastidiosa (strain Temecula1 / ATCC 700964).